A 1627-amino-acid polypeptide reads, in one-letter code: Pleckstrin homology domain-containing family G member 4B (1627 aa).

6 disordered regions span residues 211–349, 381–475, 501–537, 959–1008, 1049–1111, and 1124–1159; these read YSSC…VQPR, LTGA…GQAV, VSTD…GTGD, SEAA…PAQP, TTAH…SKGL, and PLWQ…QVGS. Residues 241–251 are compositionally biased toward polar residues; it reads GSASCPDTLTS. Composition is skewed to basic and acidic residues over residues 262 to 273 and 310 to 322; these read QLRHLPYPERAE and ERPD…DRPK. Residues 465-474 are compositionally biased toward gly residues; it reads RPGGHLGGQA. A compositionally biased stretch (basic and acidic residues) spans 975–985; that stretch reads PKHERAQEAMR. Residues 1057–1068 show a composition bias toward polar residues; that stretch reads SACSSEPTQTLA. The segment covering 1070–1081 has biased composition (basic residues); the sequence is RPRKHPQKKMIK. Polar residues-rich tracts occupy residues 1101 to 1111 and 1133 to 1144; these read PDHTSVFSKGL and PVTQSRSLSSPS. The 180-residue stretch at 1161 to 1340 folds into the DH domain; it reads RLRHIMAEMI…CFQLRHGNDL (180 aa). The 109-residue stretch at 1352-1460 folds into the PH domain; the sequence is NLKEQGQLRC…WTDVIGRILW (109 aa). Residues 1519–1558 are disordered; it reads KGTESQMRGSTAVSSSDHAAPFKRPHSTISDSSTSSSSSQ. The segment covering 1521-1535 has biased composition (polar residues); it reads TESQMRGSTAVSSSD. The span at 1545 to 1558 shows a compositional bias: low complexity; that stretch reads STISDSSTSSSSSQ.

As to quaternary structure, found in a complex with ARHGEF11 and ARHGEF12; binding to ARHGEF11 and ARHGEF12 enhances CDC42 GEF activity of PLEKHG4B, and PLEKHG4B, in turn, inhibits ARHGEF11- and ARHGEF12-mediated RHOA activation. Interacts with ANXA2; this interaction is required for PLEKHG4B localization to cell-cell adhesions.

It localises to the basal cell membrane. It is found in the cell junction. Its subcellular location is the nucleus. The protein localises to the cytoplasm. Functionally, guanine nucleotide exchange factor (GEF) which specifically activates small GTPase CDC42 by exchanging bound GDP for free GTP. Plays a role in actin cytoskeletal remodeling in the late stage of cell-cell junction formation by regulating the contractility of actin filaments, which prompts the conversion from 'open' to 'closed' junctions. In Homo sapiens (Human), this protein is Pleckstrin homology domain-containing family G member 4B.